A 367-amino-acid chain; its full sequence is Probable peptidoglycan glycosyltransferase FtsW (367 aa).

9 helical membrane passes run 32–52 (LIFILIGLFAMAFTFLMPMKF), 57–77 (AFWGYCICFLLLALVLVPGIG), 87–107 (IPIGPFNFQPSEFAKLTMIVF), 119–139 (IHGLKGFLPIIIYLGIICFLL), 149–169 (MVVVAIVMSILLLGGLGFALF), 171–191 (LLFLSAVLLVIAAILTAPWRM), 251–271 (VVGEELGFVGIFFVILLFVLL), 296–316 (GVVVWFGVQAIVNLGVCFGVF), and 323–343 (LPFISYGGSSIVISLMAFGLL).

Belongs to the SEDS family. FtsW subfamily.

Its subcellular location is the cell inner membrane. It carries out the reaction [GlcNAc-(1-&gt;4)-Mur2Ac(oyl-L-Ala-gamma-D-Glu-L-Lys-D-Ala-D-Ala)](n)-di-trans,octa-cis-undecaprenyl diphosphate + beta-D-GlcNAc-(1-&gt;4)-Mur2Ac(oyl-L-Ala-gamma-D-Glu-L-Lys-D-Ala-D-Ala)-di-trans,octa-cis-undecaprenyl diphosphate = [GlcNAc-(1-&gt;4)-Mur2Ac(oyl-L-Ala-gamma-D-Glu-L-Lys-D-Ala-D-Ala)](n+1)-di-trans,octa-cis-undecaprenyl diphosphate + di-trans,octa-cis-undecaprenyl diphosphate + H(+). The protein operates within cell wall biogenesis; peptidoglycan biosynthesis. Functionally, peptidoglycan polymerase that is essential for cell division. The sequence is that of Probable peptidoglycan glycosyltransferase FtsW from Taylorella equigenitalis (strain MCE9).